The sequence spans 283 residues: Bifunctional protein FolD (283 aa).

Residues 157–159 (GNG) and I224 contribute to the NADP(+) site.

Belongs to the tetrahydrofolate dehydrogenase/cyclohydrolase family. As to quaternary structure, homodimer.

The enzyme catalyses (6R)-5,10-methylene-5,6,7,8-tetrahydrofolate + NADP(+) = (6R)-5,10-methenyltetrahydrofolate + NADPH. It carries out the reaction (6R)-5,10-methenyltetrahydrofolate + H2O = (6R)-10-formyltetrahydrofolate + H(+). Its pathway is one-carbon metabolism; tetrahydrofolate interconversion. Its function is as follows. Catalyzes the oxidation of 5,10-methylenetetrahydrofolate to 5,10-methenyltetrahydrofolate and then the hydrolysis of 5,10-methenyltetrahydrofolate to 10-formyltetrahydrofolate. This Mycoplasmoides gallisepticum (strain R(low / passage 15 / clone 2)) (Mycoplasma gallisepticum) protein is Bifunctional protein FolD.